Consider the following 379-residue polypeptide: Sperm microtubule associated protein 2 (379 aa).

The tract at residues 1-82 (MGDSRRRSLG…EFPETLDPKE (82 aa)) is disordered. Composition is skewed to basic and acidic residues over residues 19–29 (GRSEREQDGDP) and 38–50 (ESRR…RQDL). Over residues 56-76 (GPEDPEEELPPEEVAGEEFPE) the composition is skewed to acidic residues. THEG repeat units lie at residues 118-137 (KARK…PKIN), 184-203 (TITV…PKRF), 222-241 (SSLE…PKIR), 258-277 (AAQM…PKAP), 290-309 (PKPH…PKAQ), and 326-345 (VTKK…PKVR). Ser-295 carries the phosphoserine modification. A disordered region spans residues 344-379 (VRKGLNEGYDRRPLASMSLPPPKASPEKCDQPRPGL). Composition is skewed to basic and acidic residues over residues 347–356 (GLNEGYDRRP) and 368–379 (SPEKCDQPRPGL).

Interacts with CCT5. In terms of tissue distribution, testis specific.

The protein resides in the nucleus. May be involved (but not essential) in spermatogenesis. The protein is Sperm microtubule associated protein 2 of Homo sapiens (Human).